The following is a 133-amino-acid chain: MKPSERRKARRLAVQAIYSWQLSKNNVADVEHEFITEQNIDGVDVAYFRELLAGVASKHEQIDDLLRPHLDRKFEDVSPVEKAIVRLAGYELTFRKDVPYKVAINEAIELAKAFGADDSHKFVNGLLDKLVRR.

The protein belongs to the NusB family.

In terms of biological role, involved in transcription antitermination. Required for transcription of ribosomal RNA (rRNA) genes. Binds specifically to the boxA antiterminator sequence of the ribosomal RNA (rrn) operons. The polypeptide is Transcription antitermination protein NusB (Shewanella denitrificans (strain OS217 / ATCC BAA-1090 / DSM 15013)).